The primary structure comprises 467 residues: GTPase Der (467 aa).

EngA-type G domains are found at residues 25-188 (PVVA…PEAP) and 199-372 (RRVA…ASWE). GTP-binding positions include 31-38 (GRPNVGKS), 78-82 (DTGGW), 140-143 (NKAD), 205-212 (GRPNVGKS), 252-256 (DTAGL), and 317-320 (NKWD). In terms of domain architecture, KH-like spans 373 to 455 (TRVPTAQLNA…PIEIAVRPRK (83 aa)).

It belongs to the TRAFAC class TrmE-Era-EngA-EngB-Septin-like GTPase superfamily. EngA (Der) GTPase family. Associates with the 50S ribosomal subunit.

Functionally, GTPase that plays an essential role in the late steps of ribosome biogenesis. The sequence is that of GTPase Der from Salinispora arenicola (strain CNS-205).